The sequence spans 689 residues: MTSDSSDTAKQIGSGQPSGSPADMRRRDGVAPEQEVDPASLETDEDDEARLPDLPDEPVDAVAEAPLAIGRAAIEHAVRHAPTSPGVYRMMNAARDVLYVGKAKNVRKRLSSYARPTGQVMRIARMIAATAAVEIVSTGTETEALLLEANLIKQLRPRFNVQLRDDKSFPYILITGDHWAPQLLKHRGAQSRPGRYFGPFASAGAVGRTITALQRAFLVRSCTDSFFESRTRPCLLYQIKRCAGPCTGEIDFPGYTALVREATDFLSGRSRAVKEDLARAMEQAAADLAFERAALYRDRLAALSAIQSQQGINPRTVEEADVFAIHQEGGYFCVEVFFFRTGQNWGNRAYFPRAEKSFTPEEVLGSFLAQFYDDKPPPRLILLSHRIEESELLAHALSIKAGCKVVVSTPQRGEKKELVAHALTNAREALGRKLADTATQSRLLQGLAALLGLPQPPQRVEVYDNSHIQGANAVGAMIVAGPEGFLKNQYRKFNIRSESLTPGDDYAMMREVLERRFKRLLTQKAADSRAAAEQDSAPQWPDLVIIDGGLGQLNAARGVVDALGLSRVSLMAVAKGPDRDAGRETLFLPDRPAIKLEPRDPVLYFIQRLRDEAHRFVIGSHRKLRRKDIREAGLQEVPGIGPARKRALLHHFGTLKEIERASLADLGKVPGISAESARRIFDFFHARPA.

A compositionally biased stretch (polar residues) spans 1 to 19 (MTSDSSDTAKQIGSGQPSG). The tract at residues 1–59 (MTSDSSDTAKQIGSGQPSGSPADMRRRDGVAPEQEVDPASLETDEDDEARLPDLPDEPV) is disordered. Residues 42-59 (ETDEDDEARLPDLPDEPV) show a composition bias toward acidic residues. Residues 83-161 (TSPGVYRMMN…IKQLRPRFNV (79 aa)) enclose the GIY-YIG domain. Residues 271–306 (RAVKEDLARAMEQAAADLAFERAALYRDRLAALSAI) form the UVR domain.

Belongs to the UvrC family. Interacts with UvrB in an incision complex.

The protein localises to the cytoplasm. Functionally, the UvrABC repair system catalyzes the recognition and processing of DNA lesions. UvrC both incises the 5' and 3' sides of the lesion. The N-terminal half is responsible for the 3' incision and the C-terminal half is responsible for the 5' incision. The polypeptide is UvrABC system protein C (Nitrobacter winogradskyi (strain ATCC 25391 / DSM 10237 / CIP 104748 / NCIMB 11846 / Nb-255)).